The chain runs to 564 residues: Isocitrate dehydrogenase kinase/phosphatase (564 aa).

ATP contacts are provided by residues 315-321 (APGVKGM) and K336. The active site involves D371.

The protein belongs to the AceK family.

It is found in the cytoplasm. It catalyses the reaction L-seryl-[isocitrate dehydrogenase] + ATP = O-phospho-L-seryl-[isocitrate dehydrogenase] + ADP + H(+). Its function is as follows. Bifunctional enzyme which can phosphorylate or dephosphorylate isocitrate dehydrogenase (IDH) on a specific serine residue. This is a regulatory mechanism which enables bacteria to bypass the Krebs cycle via the glyoxylate shunt in response to the source of carbon. When bacteria are grown on glucose, IDH is fully active and unphosphorylated, but when grown on acetate or ethanol, the activity of IDH declines drastically concomitant with its phosphorylation. This Idiomarina loihiensis (strain ATCC BAA-735 / DSM 15497 / L2-TR) protein is Isocitrate dehydrogenase kinase/phosphatase.